We begin with the raw amino-acid sequence, 891 residues long: Alanine--tRNA ligase (891 aa).

Positions 564, 568, 677, and 681 each coordinate Zn(2+).

Belongs to the class-II aminoacyl-tRNA synthetase family. It depends on Zn(2+) as a cofactor.

The protein resides in the cytoplasm. The catalysed reaction is tRNA(Ala) + L-alanine + ATP = L-alanyl-tRNA(Ala) + AMP + diphosphate. Catalyzes the attachment of alanine to tRNA(Ala) in a two-step reaction: alanine is first activated by ATP to form Ala-AMP and then transferred to the acceptor end of tRNA(Ala). Also edits incorrectly charged Ser-tRNA(Ala) and Gly-tRNA(Ala) via its editing domain. The polypeptide is Alanine--tRNA ligase (Bradyrhizobium sp. (strain ORS 278)).